The chain runs to 1178 residues: DNA-directed RNA polymerase subunit beta (1178 aa).

Belongs to the RNA polymerase beta chain family. The RNAP catalytic core consists of 2 alpha, 1 beta, 1 beta' and 1 omega subunit. When a sigma factor is associated with the core the holoenzyme is formed, which can initiate transcription.

The catalysed reaction is RNA(n) + a ribonucleoside 5'-triphosphate = RNA(n+1) + diphosphate. Its function is as follows. DNA-dependent RNA polymerase catalyzes the transcription of DNA into RNA using the four ribonucleoside triphosphates as substrates. The polypeptide is DNA-directed RNA polymerase subunit beta (Treponema pallidum (strain Nichols)).